Reading from the N-terminus, the 263-residue chain is Pimeloyl-[acyl-carrier protein] methyl ester esterase (263 aa).

Substrate contacts are provided by residues Trp-23, 90-91 (SL), and 152-156 (FLTLQ). Ser-90 serves as the catalytic Nucleophile. Residues Asp-216 and His-244 contribute to the active site. Residue His-244 participates in substrate binding.

It belongs to the AB hydrolase superfamily. Carboxylesterase BioH family. In terms of assembly, monomer.

It localises to the cytoplasm. It carries out the reaction 6-carboxyhexanoyl-[ACP] methyl ester + H2O = 6-carboxyhexanoyl-[ACP] + methanol + H(+). The protein operates within cofactor biosynthesis; biotin biosynthesis. In terms of biological role, the physiological role of BioH is to remove the methyl group introduced by BioC when the pimeloyl moiety is complete. It allows to synthesize pimeloyl-ACP via the fatty acid synthetic pathway through the hydrolysis of the ester bonds of pimeloyl-ACP esters. The sequence is that of Pimeloyl-[acyl-carrier protein] methyl ester esterase from Nitrosospira multiformis (strain ATCC 25196 / NCIMB 11849 / C 71).